The following is a 430-amino-acid chain: Probable FAD-dependent monooxygenase (430 aa).

Positions 1-23 (MGSTSTPPHVLIIGAGITGLALA) are cleaved as a signal peptide. FAD is bound at residue 9–37 (HVLIIGAGITGLALAQALRKHGVSFAVYE). 2 N-linked (GlcNAc...) asparagine glycosylation sites follow: Asn-130 and Asn-151. FAD is bound at residue 307–330 (LEDWPTPPKGSWSNLGGTATLVGD).

FAD is required as a cofactor.

The sequence is that of Probable FAD-dependent monooxygenase from Arthroderma benhamiae (strain ATCC MYA-4681 / CBS 112371) (Trichophyton mentagrophytes).